The chain runs to 151 residues: Ribosome maturation factor RimP (151 aa).

Belongs to the RimP family.

The protein resides in the cytoplasm. Functionally, required for maturation of 30S ribosomal subunits. This chain is Ribosome maturation factor RimP, found in Vibrio vulnificus (strain CMCP6).